The sequence spans 621 residues: Phosphomethylpyrimidine synthase (621 aa).

Low complexity predominate over residues 1–23; sequence MTAPFLSSLSPTSPLASATAPFP. Residues 1–29 form a disordered region; that stretch reads MTAPFLSSLSPTSPLASATAPFPGSRKVY. Residues Asn215, Met244, Tyr273, His309, 329–331, 370–373, and Glu409 each bind substrate; these read SRG and DGLR. Residue His413 coordinates Zn(2+). Tyr436 contributes to the substrate binding site. His477 contacts Zn(2+). [4Fe-4S] cluster-binding residues include Cys557, Cys560, and Cys565.

Belongs to the ThiC family. As to quaternary structure, homodimer. Requires [4Fe-4S] cluster as cofactor.

The catalysed reaction is 5-amino-1-(5-phospho-beta-D-ribosyl)imidazole + S-adenosyl-L-methionine = 4-amino-2-methyl-5-(phosphooxymethyl)pyrimidine + CO + 5'-deoxyadenosine + formate + L-methionine + 3 H(+). It functions in the pathway cofactor biosynthesis; thiamine diphosphate biosynthesis. Catalyzes the synthesis of the hydroxymethylpyrimidine phosphate (HMP-P) moiety of thiamine from aminoimidazole ribotide (AIR) in a radical S-adenosyl-L-methionine (SAM)-dependent reaction. In Rhodospirillum rubrum (strain ATCC 11170 / ATH 1.1.1 / DSM 467 / LMG 4362 / NCIMB 8255 / S1), this protein is Phosphomethylpyrimidine synthase.